A 289-amino-acid polypeptide reads, in one-letter code: D-psicose 3-epimerase (289 aa).

2 residues coordinate substrate: tyrosine 6 and alanine 107. Glutamate 150 functions as the Proton donor/acceptor in the catalytic mechanism. Glutamate 150 provides a ligand contact to Mn(2+). Substrate contacts are provided by residues glutamate 156 and 183-186; that span reads DTFH. The Mn(2+) site is built by aspartate 183 and histidine 209. Residue arginine 215 coordinates substrate. Glutamate 244 serves as the catalytic Proton donor/acceptor. Glutamate 244 is a Mn(2+) binding site.

Belongs to the hyi family. In terms of assembly, homotetramer. Mn(2+) is required as a cofactor. It depends on Co(2+) as a cofactor.

The enzyme catalyses D-allulose = keto-D-fructose. Its activity is regulated as follows. Inhibited by Zn(2+) and Cu(2+). Functionally, involved in the biosynthesis of D-psicose. Catalyzes the reversible epimerization of D-fructose at the C3 position to yield D-psicose. The enzyme is highly specific for D-psicose and shows very low activity with D-tagatose. The substrate specificity decreases in the following order: D-fructose, D-tagatose, D-ribulose, D-xylulose, and D-sorbose. It shows a higher level of activity for cis ketoses than for trans-ketoses. This is D-psicose 3-epimerase (dpe) from Agrobacterium fabrum (strain C58 / ATCC 33970) (Agrobacterium tumefaciens (strain C58)).